Consider the following 611-residue polypeptide: Rop guanine nucleotide exchange factor 5 (611 aa).

The segment at 1–62 is disordered; the sequence is MENLVKSCAG…PPPPPSQILG (62 aa). The span at 34–51 shows a compositional bias: low complexity; it reads STSGASYESSSTTTVASS. Positions 93–477 constitute a PRONE domain; that stretch reads FKAKEMNSAD…DLTKQSDDNN (385 aa). Disordered regions lie at residues 513–541 and 588–611; these read TTPG…TNKI and DVEE…YTVS. Residues 525 to 541 are compositionally biased toward basic and acidic residues; it reads KKGERRTPYSSKDTNKI.

Functionally, guanine-nucleotide exchange factor (GEF) that acts as an activator of Rop (Rho of plants) GTPases by promoting the exchange of GDP for GTP. The protein is Rop guanine nucleotide exchange factor 5 (ROPGEF5) of Arabidopsis thaliana (Mouse-ear cress).